Consider the following 508-residue polypeptide: Photosystem II CP47 reaction center protein (508 aa).

Helical transmembrane passes span 21 to 36 (AVHI…WAGS), 101 to 115 (IVFS…IWHW), 140 to 156 (GIHL…FGAF), 203 to 218 (IAAG…FHLS), 237 to 252 (VLSS…AFIV), and 457 to 472 (TFAL…HGAR).

The protein belongs to the PsbB/PsbC family. PsbB subfamily. PSII is composed of 1 copy each of membrane proteins PsbA, PsbB, PsbC, PsbD, PsbE, PsbF, PsbH, PsbI, PsbJ, PsbK, PsbL, PsbM, PsbT, PsbX, PsbY, PsbZ, Psb30/Ycf12, at least 3 peripheral proteins of the oxygen-evolving complex and a large number of cofactors. It forms dimeric complexes. It depends on Binds multiple chlorophylls. PSII binds additional chlorophylls, carotenoids and specific lipids. as a cofactor.

The protein resides in the plastid. It is found in the chloroplast thylakoid membrane. In terms of biological role, one of the components of the core complex of photosystem II (PSII). It binds chlorophyll and helps catalyze the primary light-induced photochemical processes of PSII. PSII is a light-driven water:plastoquinone oxidoreductase, using light energy to abstract electrons from H(2)O, generating O(2) and a proton gradient subsequently used for ATP formation. The polypeptide is Photosystem II CP47 reaction center protein (Gnetum parvifolium (Small-leaved jointfir)).